The sequence spans 140 residues: Large ribosomal subunit protein uL11 (140 aa).

This sequence belongs to the universal ribosomal protein uL11 family. As to quaternary structure, part of the ribosomal stalk of the 50S ribosomal subunit. Interacts with L10 and the large rRNA to form the base of the stalk. L10 forms an elongated spine to which L12 dimers bind in a sequential fashion forming a multimeric L10(L12)X complex. In terms of processing, one or more lysine residues are methylated.

In terms of biological role, forms part of the ribosomal stalk which helps the ribosome interact with GTP-bound translation factors. The sequence is that of Large ribosomal subunit protein uL11 from Desulfatibacillum aliphaticivorans.